A 235-amino-acid polypeptide reads, in one-letter code: MTKTQNVDPNEIKKFEDMASRWWDLEGEFKPLHQINPLRLDYVLSKADGLFGKKVLDVGCGGGILAESMAKEGAVVTGLDMGKEPLEVARLHALETGTKLTYIQSTIEDHAAENAQMYDVVTCMEMLEHVPDPLSVIRSCAALVKPGGHVFFSTLNRNIKSYLFAIVGAEKLLKIVPEGTHDHDKFIRPSELIKMIDQTDLCEQGITGLHYNPLSDTYKLGRNVDVNYIVHTQKF.

S-adenosyl-L-methionine contacts are provided by arginine 39, glycine 59, aspartate 80, and methionine 124.

The protein belongs to the methyltransferase superfamily. UbiG/COQ3 family.

The enzyme catalyses a 3-demethylubiquinol + S-adenosyl-L-methionine = a ubiquinol + S-adenosyl-L-homocysteine + H(+). It catalyses the reaction a 3-(all-trans-polyprenyl)benzene-1,2-diol + S-adenosyl-L-methionine = a 2-methoxy-6-(all-trans-polyprenyl)phenol + S-adenosyl-L-homocysteine + H(+). The protein operates within cofactor biosynthesis; ubiquinone biosynthesis. O-methyltransferase that catalyzes the 2 O-methylation steps in the ubiquinone biosynthetic pathway. This Vibrio vulnificus (strain CMCP6) protein is Ubiquinone biosynthesis O-methyltransferase.